The sequence spans 298 residues: Probable porphobilinogen deaminase (298 aa).

The residue at position 241 (Cys-241) is an S-(dipyrrolylmethanemethyl)cysteine.

Belongs to the HMBS family. Dipyrromethane is required as a cofactor.

It carries out the reaction 4 porphobilinogen + H2O = hydroxymethylbilane + 4 NH4(+). It participates in porphyrin-containing compound metabolism; protoporphyrin-IX biosynthesis; coproporphyrinogen-III from 5-aminolevulinate: step 2/4. Tetrapolymerization of the monopyrrole PBG into the hydroxymethylbilane pre-uroporphyrinogen in several discrete steps. This Methanopyrus kandleri (strain AV19 / DSM 6324 / JCM 9639 / NBRC 100938) protein is Probable porphobilinogen deaminase.